The following is a 122-amino-acid chain: Large ribosomal subunit protein uL14 (122 aa).

It belongs to the universal ribosomal protein uL14 family. Part of the 50S ribosomal subunit. Forms a cluster with proteins L3 and L19. In the 70S ribosome, L14 and L19 interact and together make contacts with the 16S rRNA in bridges B5 and B8.

In terms of biological role, binds to 23S rRNA. Forms part of two intersubunit bridges in the 70S ribosome. This is Large ribosomal subunit protein uL14 from Geobacillus sp. (strain WCH70).